The sequence spans 1597 residues: Transmembrane protein 131-like (1597 aa).

The first 40 residues, 1 to 40 (MAGLRRPQSGAYRRTAAAVNLLLGVFQVLLSCCRPGGAQG), serve as a signal peptide directing secretion. Residues 41 to 869 (QAFEPLPNVV…VVPGPSWEES (829 aa)) are Extracellular-facing. Asn343, Asn593, Asn709, and Asn846 each carry an N-linked (GlcNAc...) asparagine glycan. The interval 696–916 (DYGKVTSLIL…QNGSSSSQQN (221 aa)) is required for Wnt-signaling inhibition and LRP6 degradation. The helical transmembrane segment at 870–890 (FWRLTVFFVSLSLLGVILIAF) threads the bilayer. Residues 891–1597 (QQAQYILMEF…SRDSSYCGNM (707 aa)) lie on the Cytoplasmic side of the membrane. The span at 907-917 (QNGSSSSQQNG) shows a compositional bias: low complexity. Disordered regions lie at residues 907–928 (QNGS…SHPH), 1096–1240 (AELK…EQRL), and 1252–1322 (DGAG…SDCD). Positions 1213 to 1222 (RPCRRNKKRA) are enriched in basic residues. Low complexity predominate over residues 1223–1239 (SAQASSSPRPSEQSEQR). Positions 1269–1290 (PERREEDSYYQKSEKKCADKFC) are enriched in basic and acidic residues. Residues 1291-1319 (SDSSSDCGSSSGSVRASRGSWGSWSSSSS) show a composition bias toward low complexity.

Belongs to the TMEM131 family.

The protein resides in the cell membrane. It localises to the endoplasmic reticulum. It is found in the cytoplasm. In terms of biological role, in its membrane-associated form, antagonizes canonical Wnt signaling by triggering lysosome-dependent degradation of Wnt-activated LRP6. Regulates thymocyte proliferation. The protein is Transmembrane protein 131-like of Mus musculus (Mouse).